The chain runs to 211 residues: Regulator of G-protein signaling 2 (211 aa).

The necessary for membrane association stretch occupies residues 32–66 (KMKRTLLKDWKTRLSYFLQNSSTPGKPKTGKKSKQ). A necessary to inhibit protein synthesis region spans residues 79 to 116 (LWAEAFDELLASKYGLAAFRAFLKSEFCEENIEFWLAC). The region spanning 83–199 (AFDELLASKY…LESEFYQDLC (117 aa)) is the RGS domain.

As to quaternary structure, interacts with GNAQ. Does not interact with GNAI1 and GNAI3. Interacts with EIF2B5. Interacts with PRKG1 (isoform alpha). In terms of processing, phosphorylated by protein kinase C. Phosphorylation by PRKG1 leads to activation of RGS2 activity.

It localises to the cell membrane. Its subcellular location is the cytoplasm. The protein resides in the nucleus. It is found in the nucleolus. Functionally, regulates G protein-coupled receptor signaling cascades. Inhibits signal transduction by increasing the GTPase activity of G protein alpha subunits, thereby driving them into their inactive GDP-bound form. It is involved in the negative regulation of the angiotensin-activated signaling pathway. Plays a role in the regulation of blood pressure in response to signaling via G protein-coupled receptors and GNAQ. Plays a role in regulating the constriction and relaxation of vascular smooth muscle. Binds EIF2B5 and blocks its activity, thereby inhibiting the translation of mRNA into protein. The polypeptide is Regulator of G-protein signaling 2 (Rgs2) (Rattus norvegicus (Rat)).